A 114-amino-acid polypeptide reads, in one-letter code: uncharacterized protein (114 aa).

The interval 1 to 37 (MLKKILSLFKKEEPKTEEKPTEVEEKKEEREEKEEKK) is disordered. The segment covering 9–37 (FKKEEPKTEEKPTEVEEKKEEREEKEEKK) has biased composition (basic and acidic residues).

This is an uncharacterized protein from Aquifex aeolicus (strain VF5).